The sequence spans 662 residues: uncharacterized protein (662 aa).

Residues Ser-145, Glu-164, Trp-173, Asp-184, and Tyr-190 each contribute to the FAD site. The disordered stretch occupies residues 638 to 662 (SRLETSGVPREGVQRPGSRLRRRPS).

It belongs to the FAD-binding monooxygenase family. Requires FAD as cofactor.

This is an uncharacterized protein from Sinorhizobium fredii (strain NBRC 101917 / NGR234).